A 606-amino-acid chain; its full sequence is Serine/threonine-protein kinase A-Raf (606 aa).

The region spanning 19–91 is the RBD domain; sequence GTVKVYLPNK…DGEELIVEVL (73 aa). A Phorbol-ester/DAG-type zinc finger spans residues 98 to 144; that stretch reads MHNFVRKTFFSLAFCDFCLKFLFHGFRCQTCGYKFHQHCSSKVPTVC. Zn(2+)-binding residues include His99, Cys112, Cys115, Cys125, Cys128, His133, Cys136, and Cys144. Ser157 and Ser162 each carry phosphoserine. A disordered region spans residues 160-207; the sequence is DLSGGSRQHEAPSNRPLNELLTPQGPSPRTQHCDPEHFPFPAPANAPL. A Phosphothreonine modification is found at Thr181. 2 positions are modified to phosphoserine: Ser186 and Ser214. Residues 240–290 are disordered; sequence STDAAGSRGGSDGTPRGSPSPASVSSGRKSPHSKSPAEQRERKSLADDKKK. Thr253 bears the Phosphothreonine mark. Phosphoserine occurs at positions 257 and 269. A compositionally biased stretch (basic and acidic residues) spans 274–289; it reads SPAEQRERKSLADDKK. The 261-residue stretch at 310 to 570 folds into the Protein kinase domain; it reads VQLLKRIGTG…PQILATIELL (261 aa). ATP contacts are provided by residues 316 to 324 and Lys336; that span reads IGTGSFGTV. Phosphothreonine is present on Thr318. Asp429 acts as the Proton acceptor in catalysis.

The protein belongs to the protein kinase superfamily. TKL Ser/Thr protein kinase family. RAF subfamily. Interacts with TH1L/NELFD. It depends on Zn(2+) as a cofactor. In terms of processing, dephosphorylation of Ser-214 by the SHOC2-MRAS-PP1c (SMP) complex consisting of SHOC2, GTP-bound M-Ras/MRAS and the catalytic subunit of protein phosphatase 1 (PPP1CA, PPP1CB or PPP1CC); this relieves inactivation and stimulates kinase activity. Predominantly in urogenital tissues.

It catalyses the reaction L-seryl-[protein] + ATP = O-phospho-L-seryl-[protein] + ADP + H(+). The catalysed reaction is L-threonyl-[protein] + ATP = O-phospho-L-threonyl-[protein] + ADP + H(+). Functionally, involved in the transduction of mitogenic signals from the cell membrane to the nucleus. May also regulate the TOR signaling cascade. Phosphorylates PFKFB2. In terms of biological role, serves as a positive regulator of myogenic differentiation by inducing cell cycle arrest, the expression of myogenin and other muscle-specific proteins, and myotube formation. The protein is Serine/threonine-protein kinase A-Raf (ARAF) of Homo sapiens (Human).